The sequence spans 867 residues: Putative RNA-directed RNA polymerase (867 aa).

Residues 561–676 (PVAIGVDASR…ITDRANEKLF (116 aa)) enclose the RdRp catalytic domain.

It belongs to the luteoviruses RNA polymerase family.

It carries out the reaction RNA(n) + a ribonucleoside 5'-triphosphate = RNA(n+1) + diphosphate. In terms of biological role, probable polymerase. The protein is Putative RNA-directed RNA polymerase of Avena byzantina (Oat).